Consider the following 371-residue polypeptide: Poly(rC)-binding protein 3 (371 aa).

KH domains lie at 45 to 95 (TLTI…TITG), 129 to 182 (PVTL…TISG), and 293 to 357 (ASTH…QYLI).

It localises to the cytoplasm. Its function is as follows. Single-stranded nucleic acid binding protein that binds preferentially to oligo dC. In Homo sapiens (Human), this protein is Poly(rC)-binding protein 3.